The sequence spans 458 residues: MACNSSGCESGCYDREKDNGSKIVDDAVSGGGNHESVCVKCKCNAPMTFGDGGFDDGRFCADCFRNNVFGKFRLAVTSHAMITPSDNVLVAFSGGSSSRVSLQFVHELQIKALKNYEASRDRSLPVFGVGVAFVDETAAFPALSTEMIDAIEWVRYTVSCLSPPAKDLHVVPVESIFGSDSLDARDRLLKLLDSVPDDTGKEDLLLHLKMLSLQKVAAENGYNRLVLGSCTSRIASHVLTATVKGRGYSLSADIQHVDARWKVPIVLPLRDCVRLEITRLCLLDGLKTVELACRSQCGINDLVSSFVALLQEENPSRECTIVRTAAKLTPFYFNKIPETDDSNVPMATQRRLKRFNLKYDGSMTTEAFCPICNGPLNRSDSSELDTFEEGQESDVLYAACCSSCRFQILPQDGSSLEQFSSFLPDHMISQVKHQKVDSQAYLREKIKDCLLLDDEEVV.

It belongs to the CTU2/NCS2 family.

Its subcellular location is the cytoplasm. Its pathway is tRNA modification; 5-methoxycarbonylmethyl-2-thiouridine-tRNA biosynthesis. Its function is as follows. Plays a central role in 2-thiolation of mcm(5)S(2)U at tRNA wobble positions of tRNA(Lys), tRNA(Glu) and tRNA(Gln). May act by forming a heterodimer with NCS6/CTU1 that ligates sulfur from thiocarboxylated URM1 onto the uridine of tRNAs at wobble position. In Arabidopsis thaliana (Mouse-ear cress), this protein is Cytoplasmic tRNA 2-thiolation protein 2.